Consider the following 92-residue polypeptide: UPF0250 protein XOO3732 (92 aa).

This sequence belongs to the UPF0250 family.

The sequence is that of UPF0250 protein XOO3732 from Xanthomonas oryzae pv. oryzae (strain MAFF 311018).